Reading from the N-terminus, the 359-residue chain is Peptide chain release factor 1 (359 aa).

Position 234 is an N5-methylglutamine (Q234).

This sequence belongs to the prokaryotic/mitochondrial release factor family. In terms of processing, methylated by PrmC. Methylation increases the termination efficiency of RF1.

Its subcellular location is the cytoplasm. Peptide chain release factor 1 directs the termination of translation in response to the peptide chain termination codons UAG and UAA. The protein is Peptide chain release factor 1 of Clavibacter michiganensis subsp. michiganensis (strain NCPPB 382).